The primary structure comprises 223 residues: Large ribosomal subunit protein bL21 (223 aa).

Belongs to the bacterial ribosomal protein bL21 family. In terms of assembly, part of the 50S ribosomal subunit. Contacts protein L20.

This protein binds to 23S rRNA in the presence of protein L20. In Mesorhizobium japonicum (strain LMG 29417 / CECT 9101 / MAFF 303099) (Mesorhizobium loti (strain MAFF 303099)), this protein is Large ribosomal subunit protein bL21.